We begin with the raw amino-acid sequence, 391 residues long: Leucine aminopeptidase 1 (391 aa).

Positions 1-19 are cleaved as a signal peptide; the sequence is MKLSIALALGATASTGVLA. Positions 20–91 are excised as a propeptide; that stretch reads AVVPQQEPLI…YPTLHAGSYV (72 aa). An N-linked (GlcNAc...) asparagine glycan is attached at Asn183. Residues His191 and Asp210 each coordinate Zn(2+). Asn235 carries an N-linked (GlcNAc...) asparagine glycan. Residues Glu249 and Asp276 each coordinate Zn(2+). Cys325 and Cys329 are disulfide-bonded. His358 contacts Zn(2+).

It belongs to the peptidase M28 family. M28E subfamily. In terms of assembly, monomer. The cofactor is Zn(2+).

It is found in the secreted. Extracellular aminopeptidase that allows assimilation of proteinaceous substrates. This chain is Leucine aminopeptidase 1 (lap1), found in Aspergillus niger (strain ATCC MYA-4892 / CBS 513.88 / FGSC A1513).